Here is a 260-residue protein sequence, read N- to C-terminus: Methylesterase 7 (260 aa).

Ser-84 serves as the catalytic Acyl-ester intermediate. Residues Asp-210 and His-238 each act as charge relay system in the active site.

The protein belongs to the AB hydrolase superfamily. Methylesterase family.

The enzyme catalyses methyl (indol-3-yl)acetate + H2O = (indol-3-yl)acetate + methanol + H(+). The catalysed reaction is methyl salicylate + H2O = salicylate + methanol + H(+). It participates in plant hormone biosynthesis. With respect to regulation, esterase activity is down-regulated by salicylic acid (SA). Methylesterase shown to have carboxylesterase activity, methyl indole-3-acetic acid (MeIAA) esterase activity and methyl salicylate (MeSA) esterase activity in vitro. Required to convert methyl salicylate (MeSA) to salicylic acid (SA) as part of the signal transduction pathways that activate systemic acquired resistance in systemic tissue. MeSA is believed to be an inactive form that needs to be demethylated to exert a biological effect. This chain is Methylesterase 7, found in Arabidopsis thaliana (Mouse-ear cress).